Here is an 884-residue protein sequence, read N- to C-terminus: Alanine--tRNA ligase (884 aa).

Zn(2+) is bound by residues His-565, His-569, Cys-675, and His-679.

It belongs to the class-II aminoacyl-tRNA synthetase family. The cofactor is Zn(2+).

Its subcellular location is the cytoplasm. It catalyses the reaction tRNA(Ala) + L-alanine + ATP = L-alanyl-tRNA(Ala) + AMP + diphosphate. Functionally, catalyzes the attachment of alanine to tRNA(Ala) in a two-step reaction: alanine is first activated by ATP to form Ala-AMP and then transferred to the acceptor end of tRNA(Ala). Also edits incorrectly charged Ser-tRNA(Ala) and Gly-tRNA(Ala) via its editing domain. The protein is Alanine--tRNA ligase of Maricaulis maris (strain MCS10) (Caulobacter maris).